Reading from the N-terminus, the 166-residue chain is MSDEGKLFIGGLNFDTNEESLEQVFSKYGQISEVVVVKDRETKRSRGFGFVTFENPDDAKDAMMAMNGKAVDGRQIRVDQAGKSSGDRRGGYRGGSSGGRGFFRGGRGRGGGDRGYGSSRFDNRSGGYGGSSGSRDYYSSGRSQGSYGDRAGGSYRDSYDSYATHE.

The RRM domain maps to 5-83; sequence GKLFIGGLNF…RQIRVDQAGK (79 aa). Residues 68-166 form a disordered region; that stretch reads GKAVDGRQIR…DSYDSYATHE (99 aa). Residues 92-115 are compositionally biased toward gly residues; it reads YRGGSSGGRGFFRGGRGRGGGDRG. Residues 133–149 are compositionally biased toward low complexity; the sequence is GSRDYYSSGRSQGSYGD. Residues 157–166 show a composition bias toward basic and acidic residues; that stretch reads DSYDSYATHE.

In terms of assembly, interacts with prmt1. Interacts with elavl1/elrA (via RRM3). Associates with ribosomes. Post-translationally, methylated on arginine residues within RGG motifs. Methylation by prmt1 promotes cytoplasmic accumulation. As to expression, in adults, most abundant in testis, ovary, brain and liver, with lower expression in kidney and heart.

It localises to the nucleus. Its subcellular location is the nucleoplasm. It is found in the cytoplasm. Its function is as follows. Cold-inducible mRNA binding protein. Acts cooperatively with elavl1/elrA to stabilize AU-rich element (ARE)-containing mRNAs by binding to them and inhibiting their deadenylation. Essential for embryonic gastrulation and neural development, acting to maintain the expression of a set of adhesion molecules, and cell movement during embryogenesis. Required for pronephros development. The chain is Cold-inducible RNA-binding protein B (cirbp-b) from Xenopus laevis (African clawed frog).